The primary structure comprises 229 residues: Potassium/proton antiporter CemA (229 aa).

The next 3 membrane-spanning stretches (helical) occupy residues 7-27, 106-126, and 189-209; these read LNPL…SLSF, IILH…YSIL, and IISG…KYWI.

This sequence belongs to the CemA family.

It localises to the plastid. Its subcellular location is the chloroplast inner membrane. The catalysed reaction is K(+)(in) + H(+)(out) = K(+)(out) + H(+)(in). Its function is as follows. Contributes to K(+)/H(+) antiport activity by supporting proton efflux to control proton extrusion and homeostasis in chloroplasts in a light-dependent manner to modulate photosynthesis. Prevents excessive induction of non-photochemical quenching (NPQ) under continuous-light conditions. Indirectly promotes efficient inorganic carbon uptake into chloroplasts. This Nymphaea alba (White water-lily) protein is Potassium/proton antiporter CemA.